A 34-amino-acid polypeptide reads, in one-letter code: Calcitonin-like peptide 1 (34 aa).

A disulfide bridge links C2 with C7. Residue P34 is modified to Proline amide.

The sequence is that of Calcitonin-like peptide 1 from Odorrana schmackeri (Schmacker's frog).